Consider the following 361-residue polypeptide: Chorismate synthase (361 aa).

The NADP(+) site is built by Arg48 and Arg54. Residues 125 to 127 (RSS), 238 to 239 (NA), Gly278, 293 to 297 (KPTSS), and Arg319 each bind FMN.

Belongs to the chorismate synthase family. Homotetramer. Requires FMNH2 as cofactor.

The enzyme catalyses 5-O-(1-carboxyvinyl)-3-phosphoshikimate = chorismate + phosphate. Its pathway is metabolic intermediate biosynthesis; chorismate biosynthesis; chorismate from D-erythrose 4-phosphate and phosphoenolpyruvate: step 7/7. Its function is as follows. Catalyzes the anti-1,4-elimination of the C-3 phosphate and the C-6 proR hydrogen from 5-enolpyruvylshikimate-3-phosphate (EPSP) to yield chorismate, which is the branch point compound that serves as the starting substrate for the three terminal pathways of aromatic amino acid biosynthesis. This reaction introduces a second double bond into the aromatic ring system. In Methylobacillus flagellatus (strain ATCC 51484 / DSM 6875 / VKM B-1610 / KT), this protein is Chorismate synthase.